The primary structure comprises 577 residues: MPRGLELLIAQTILQGFDAQYGRFLEVTSGAQQRFEQADWHAVQQAMKSRIHLYDHHVGLVVEQLRCITNGQSTDAAFLLRVKEHYTRLLPDYPRFEIAESFFNSVYCRLFDHRSLTPERLFIFSSQPERRFRTIPRPLAKDFYPDHGWESLLMRVISDLPLRLRWQNKSRDIHYIIRHLTEMLGTDNLAESHLQVANELFYRNKAAWLVGKLNTPFGTLPFLLPIHQTDDGELFIDTCLTTTAEASIVFGFARSYFMVYAPLPAALVEWLREILPGKTTAELYMAIGCQKHAKTESYREYLVYLQGCNEQFIEAPGIRGMVMLVFTLPGFDRVFKVIKDKFAPQKEMSAAHVRACYQLVKEHDRVGRMADTQEFENFVLEKRHISPTLMELLLQEAAEKITDLGEQIVIRHLYIERRMVPLNIWLEQVEGQQLRDAIEEYGNAIRQLAAANIFPGDMLFKNFGVTRHGRVVFYDYDEICYMTEVNFRDIPPSRYPEDELASEPWYSVSPGDVFPEEFRHWLCADPRIGPLFEEMHADLFRADYWRALQNRIREGHVEDVYAYRRRQRFSVRYRPQV.

Residues 315-321 and Lys-336 each bind ATP; that span reads APGIRGM. Asp-371 is a catalytic residue.

It belongs to the AceK family.

It is found in the cytoplasm. It catalyses the reaction L-seryl-[isocitrate dehydrogenase] + ATP = O-phospho-L-seryl-[isocitrate dehydrogenase] + ADP + H(+). Its function is as follows. Bifunctional enzyme which can phosphorylate or dephosphorylate isocitrate dehydrogenase (IDH) on a specific serine residue. This is a regulatory mechanism which enables bacteria to bypass the Krebs cycle via the glyoxylate shunt in response to the source of carbon. When bacteria are grown on glucose, IDH is fully active and unphosphorylated, but when grown on acetate or ethanol, the activity of IDH declines drastically concomitant with its phosphorylation. This Escherichia fergusonii (strain ATCC 35469 / DSM 13698 / CCUG 18766 / IAM 14443 / JCM 21226 / LMG 7866 / NBRC 102419 / NCTC 12128 / CDC 0568-73) protein is Isocitrate dehydrogenase kinase/phosphatase.